The sequence spans 379 residues: (R)-2-hydroxyglutaryl-CoA dehydratase, subunit beta (379 aa).

Belongs to the FldB/FldC dehydratase alpha/beta subunit family. The (R)-2-hydroxyglutaryl-CoA dehydratase enzyme system is a heterodimer composed of an alpha subunit (HgdA) and a beta subunit (HgdB). It depends on [4Fe-4S] cluster as a cofactor. The cofactor is FMN. Requires Mg(2+) as cofactor.

Its subcellular location is the cytoplasm. The enzyme catalyses (R)-2-hydroxyglutaryl-CoA = (2E)-glutaconyl-CoA + H2O. It functions in the pathway amino-acid degradation; L-glutamate degradation via hydroxyglutarate pathway; crotonoyl-CoA from L-glutamate: step 4/5. With respect to regulation, activated by the HgdC. Reversibly inactivated by oxidants such as 2-nitrophenol, 3-nitrophenol, 4-nitrophenol, 4-nitrobenzoate, carbonyl cyanide 4-(trifluoromethoxy)phenylhydrazone (FCCP) and chloramphenicol. Irreversibly inactivated by oxidants such as hydroxylamine and nitrite. In terms of biological role, involved in the fermentation of L-glutamate via the hydroxyglutarate pathway. Catalyzes the reversible syn-elimination of water from (R)-2-hydroxyglutaryl-CoA to yield (E)-glutaconyl-CoA. The dehydration mechanism involves a transient one electron reduction of the thioester from (R)-2-hydroxyglutaryl-CoA, generating a ketyl radical. Prior to (E)-glutaconyl-CoA formation, the ketyl radical is subsequently reoxidized by electron transfer back to the HgdA-HgdB complex (CompD) to avoid change in oxidation state of the substrate. The appropriate redox state of dehydratase HgdA-HgdB complex (CompD) is maintained by HgdC (CompA) via hydrolysis of ATP and ATP-dependent electron transfer. Since the electron is recycled, the dehydratase is able to perform several turnovers with only catalytic amounts of ATP and substoichiometric amounts of HgdC (CompA). This Acidaminococcus fermentans (strain ATCC 25085 / DSM 20731 / CCUG 9996 / CIP 106432 / VR4) protein is (R)-2-hydroxyglutaryl-CoA dehydratase, subunit beta.